The primary structure comprises 581 residues: MYRTHNCGELRKKDVEKEVILSGWVDRIRDLGGIKFIILRDRYGKTQLVVNPNSPAYEISQELGREWVIQVYGKVLERPDETKTEMVTGEIEVEVNKIKVLSKSDVPPFYPGENVSEDLRLKYRYIDLRDERMQKNLIIRHKMAQAAREFLNKHDFLEVETPYLTKSTPEGARDFLVPSRLQKGKFYALPQSPQLFKQILMVSGFDRYYQFARCFRDEDLRADRQPEFTQIDIEMSFVKMDEILDLMESFARFVFGKVGIKLPEKFDRLSYEEAMELYGSDKPDRRYGMQLQDFTNYFVNTEFKVIKNVLERSGSVKGFITTIPISRKIASQFEEFVKQYGLGGLLWFKLDDEIVSPTAKFLKESYKKIVKEYNLDKGSVVLLAAHENREILNTALGALRLKVGKEYFNELEKVFDALWIVDFPFLEWNEEESRFEARHHPFTMPKNLEQKLEDIKAYAYDMILNGMEIGGGSIRIHDSEVQKRVFEIIGLTEEEANEKFGFFISALKYGVPPHGGIAFGFDRMVSIAANVASIRDVIAFPKTSSGICQLTGAPSTVEEKQLKELSIQIFKGGIENERNES.

E170 contacts L-aspartate. An aspartate region spans residues 194–197; it reads QLFK. Residue R216 coordinates L-aspartate. Residues 216-218 and Q225 contribute to the ATP site; that span reads RDE. H439 contributes to the L-aspartate binding site. E468 contacts ATP. R475 provides a ligand contact to L-aspartate. 520 to 523 is an ATP binding site; sequence GFDR.

The protein belongs to the class-II aminoacyl-tRNA synthetase family. Type 1 subfamily. Homodimer.

The protein localises to the cytoplasm. The enzyme catalyses tRNA(Asp) + L-aspartate + ATP = L-aspartyl-tRNA(Asp) + AMP + diphosphate. Functionally, catalyzes the attachment of L-aspartate to tRNA(Asp) in a two-step reaction: L-aspartate is first activated by ATP to form Asp-AMP and then transferred to the acceptor end of tRNA(Asp). The sequence is that of Aspartate--tRNA ligase from Thermosipho melanesiensis (strain DSM 12029 / CIP 104789 / BI429).